The following is a 609-amino-acid chain: Tyrosine-protein kinase transforming protein Fes (609 aa).

Disordered stretches follow at residues 1–20 (AARA…PQGH) and 152–208 (RDSA…GGRT). Residues 8–174 (MGFSSELCSP…SKDKDRDKAK (167 aa)) form the F-BAR; degenerate domain. Composition is skewed to basic and acidic residues over residues 160 to 175 (KYQE…KAKL) and 190 to 206 (QDDR…REGG). The SH2 domain occupies 247–336 (WYHGALPRAE…KSGIVLNRAV (90 aa)). Residues 348-609 (LVLGEQIGRG…ELQSIRKRHR (262 aa)) enclose the Protein kinase domain. ATP-binding positions include 354–362 (IGRGNFGEV) and Lys377. The active-site Proton acceptor is the Asp470. Tyr500 carries the post-translational modification Phosphotyrosine; by autocatalysis.

Belongs to the protein kinase superfamily. Tyr protein kinase family. Fes/fps subfamily.

The catalysed reaction is L-tyrosyl-[protein] + ATP = O-phospho-L-tyrosyl-[protein] + ADP + H(+). This Felidae (cat family) protein is Tyrosine-protein kinase transforming protein Fes (V-FES).